Consider the following 109-residue polypeptide: MNIASGMNQMLAQLKATSDLAAGGNKPAAVAPAASQADFGQLLKSAVDQVNTVQQTANQLSQEFVRGNQDVELHDVMISLQKANVSFQSMIQVRNRLVTAYQEIMNMQV.

It belongs to the FliE family.

It localises to the bacterial flagellum basal body. The chain is Flagellar hook-basal body complex protein FliE from Nitrosomonas eutropha (strain DSM 101675 / C91 / Nm57).